Here is a 108-residue protein sequence, read N- to C-terminus: uncharacterized protein (108 aa).

The N-terminal stretch at 1 to 16 (MKKLILIAIMASGLVA) is a signal peptide. Cysteine 17 is lipidated: N-palmitoyl cysteine. The S-diacylglycerol cysteine moiety is linked to residue cysteine 17.

Its subcellular location is the cell membrane. This is an uncharacterized protein from Escherichia coli (strain K12).